The chain runs to 205 residues: SREBP regulating gene protein (205 aa).

The Cytoplasmic portion of the chain corresponds to 1-16 (MLNLAALLWRRLLRKR). Residues 17–35 (WVLALVFGLSLVYFLSSTF) traverse the membrane as a helical segment. Over 36 to 205 (KQEERAVRDR…GESPPELFPA (170 aa)) the chain is Lumenal. N-linked (GlcNAc...) asparagine glycosylation is present at Asn-67.

This sequence belongs to the SPRING family. In terms of assembly, interacts with SCAP. In terms of tissue distribution, ubiquitously expressed with a slightly higher expression in the liver and kidney.

The protein resides in the golgi apparatus membrane. Its function is as follows. Positively regulates hepatic SREBP signaling pathway by modulating the proper localization of SCAP (SREBP cleavage-activating protein) to the endoplasmic reticulum, thereby controlling the level of functional SCAP. Plays a crucial role during embryogenesis. In Mus musculus (Mouse), this protein is SREBP regulating gene protein (Spring1).